The primary structure comprises 281 residues: Probable endonuclease 4 (281 aa).

Residues His-69, His-109, Glu-145, Asp-179, His-182, His-216, Asp-229, His-231, and Glu-261 each contribute to the Zn(2+) site.

Belongs to the AP endonuclease 2 family. Zn(2+) serves as cofactor.

It carries out the reaction Endonucleolytic cleavage to 5'-phosphooligonucleotide end-products.. In terms of biological role, endonuclease IV plays a role in DNA repair. It cleaves phosphodiester bonds at apurinic or apyrimidinic (AP) sites, generating a 3'-hydroxyl group and a 5'-terminal sugar phosphate. This chain is Probable endonuclease 4, found in Nautilia profundicola (strain ATCC BAA-1463 / DSM 18972 / AmH).